The primary structure comprises 429 residues: Ribosomal RNA small subunit methyltransferase B (429 aa).

S-adenosyl-L-methionine-binding positions include 254–260 (CAAPGGK), Asp277, Asp303, and Asp322. Cys375 acts as the Nucleophile in catalysis.

It belongs to the class I-like SAM-binding methyltransferase superfamily. RsmB/NOP family.

The protein localises to the cytoplasm. It catalyses the reaction cytidine(967) in 16S rRNA + S-adenosyl-L-methionine = 5-methylcytidine(967) in 16S rRNA + S-adenosyl-L-homocysteine + H(+). Specifically methylates the cytosine at position 967 (m5C967) of 16S rRNA. In Pectobacterium atrosepticum (strain SCRI 1043 / ATCC BAA-672) (Erwinia carotovora subsp. atroseptica), this protein is Ribosomal RNA small subunit methyltransferase B.